A 424-amino-acid chain; its full sequence is Enolase (424 aa).

Q165 contributes to the (2R)-2-phosphoglycerate binding site. E207 acts as the Proton donor in catalysis. Residues D244, E283, and D310 each contribute to the Mg(2+) site. The (2R)-2-phosphoglycerate site is built by K335, R364, S365, and K386. K335 serves as the catalytic Proton acceptor.

The protein belongs to the enolase family. Mg(2+) serves as cofactor.

The protein resides in the cytoplasm. It localises to the secreted. Its subcellular location is the cell surface. The catalysed reaction is (2R)-2-phosphoglycerate = phosphoenolpyruvate + H2O. It functions in the pathway carbohydrate degradation; glycolysis; pyruvate from D-glyceraldehyde 3-phosphate: step 4/5. Functionally, catalyzes the reversible conversion of 2-phosphoglycerate (2-PG) into phosphoenolpyruvate (PEP). It is essential for the degradation of carbohydrates via glycolysis. This is Enolase from Chlamydia muridarum (strain MoPn / Nigg).